Here is a 206-residue protein sequence, read N- to C-terminus: Probable N-acetyltransferase 14 (206 aa).

Positions 6–206 constitute an N-acetyltransferase domain; it reads LSVREMREDE…TLVREFSKDL (201 aa). The chain crosses the membrane as a helical span at residues 57–77; that stretch reads FVLASFALALLLPVFLAVAAV.

It belongs to the camello family. In terms of tissue distribution, expressed in K-562 and HeLa cell lines and in brain.

The protein resides in the membrane. Functionally, probable acetyltransferase. In terms of biological role, may act as a transcription factor that regulates the expression of coproporphyrinogen oxidase by binding to a promoter regulatory element. The chain is Probable N-acetyltransferase 14 (NAT14) from Homo sapiens (Human).